Reading from the N-terminus, the 72-residue chain is Dermaseptin AA-3-4 (72 aa).

The N-terminal stretch at 1–22 (MAFLKKSLFLVLFLGLVSLSIC) is a signal peptide. Residues 23-43 (DEEKRENEDEEEQEDDEQSEE) constitute a propeptide that is removed on maturation. Residues 24 to 45 (EEKRENEDEEEQEDDEQSEEKR) form a disordered region. Over residues 30-41 (EDEEEQEDDEQS) the composition is skewed to acidic residues.

Belongs to the frog skin active peptide (FSAP) family. As to expression, expressed by the skin glands.

The protein localises to the secreted. Functionally, possesses a potent antimicrobial activity against Gram-positive and Gram-negative bacteria. Probably acts by disturbing membrane functions with its amphipathic structure. This Agalychnis annae (Blue-sided leaf frog) protein is Dermaseptin AA-3-4.